Here is a 105-residue protein sequence, read N- to C-terminus: Nucleoid-associated protein RPC_4847 (105 aa).

It belongs to the YbaB/EbfC family. In terms of assembly, homodimer.

It is found in the cytoplasm. The protein resides in the nucleoid. Its function is as follows. Binds to DNA and alters its conformation. May be involved in regulation of gene expression, nucleoid organization and DNA protection. This is Nucleoid-associated protein RPC_4847 from Rhodopseudomonas palustris (strain BisB18).